Here is a 323-residue protein sequence, read N- to C-terminus: Palmitoyltransferase ZDHHC20-B (323 aa).

Over 1–14 (MAPTHVLRCCQRGL) the chain is Cytoplasmic. Residues 15–35 (AWIPVIFIALVVCWSYYAYVV) form a helical membrane-spanning segment. Residues 36–41 (ELCLLV) lie on the Lumenal side of the membrane. A helical transmembrane segment spans residues 42 to 62 (YLVVFHLSFVMFVWSYWKTIF). Topologically, residues 63–157 (TKPANPSKEF…NNCVGFSNYK (95 aa)) are cytoplasmic. The DHHC domain occupies 114–164 (RYCDRCQVIKPDRCHHCSACDMCVLKMDHHCPWVNNCVGFSNYKFFILFLT). Residue cysteine 144 is the S-palmitoyl cysteine intermediate of the active site. Residues 158-178 (FFILFLTYSLVYCLFIAASVL) form a helical membrane-spanning segment. Residues 179 to 195 (QYFIKFWTSDLPESHAK) lie on the Lumenal side of the membrane. The chain crosses the membrane as a helical span at residues 196–219 (FHVLFLFFVAAMFCISILSLFTYH). The Cytoplasmic segment spans residues 220–323 (LWLVGKNRST…KQAKKKKTDE (104 aa)).

This sequence belongs to the DHHC palmitoyltransferase family.

The protein resides in the golgi apparatus membrane. It localises to the cell membrane. Its subcellular location is the cytoplasm. The protein localises to the perinuclear region. It is found in the endoplasmic reticulum membrane. The protein resides in the endoplasmic reticulum-Golgi intermediate compartment membrane. It catalyses the reaction L-cysteinyl-[protein] + hexadecanoyl-CoA = S-hexadecanoyl-L-cysteinyl-[protein] + CoA. The enzyme catalyses L-cysteinyl-[protein] + tetradecanoyl-CoA = S-tetradecanoyl-L-cysteinyl-[protein] + CoA. It carries out the reaction L-cysteinyl-[protein] + octadecanoyl-CoA = S-octadecanoyl-L-cysteinyl-[protein] + CoA. Palmitoyltransferase that could catalyze the addition of palmitate onto various protein substrates. Catalyzes palmitoylation of Cys residues on protein substrates and has a preference for acyl-CoA with C16 fatty acid chains but may also utilize acyl-CoA with C14 and C18 fatty acid chains. This Danio rerio (Zebrafish) protein is Palmitoyltransferase ZDHHC20-B (zdhhc20b).